Here is a 543-residue protein sequence, read N- to C-terminus: Carboxypeptidase Y homolog A (543 aa).

Residues 1-17 form the signal peptide; sequence MKFLTTGLLATAALAAA. A propeptide spanning residues 18–124 is cleaved from the precursor; it reads QEQQVLQAED…KLHNYDLRVK (107 aa). Intrachain disulfides connect Cys179/Cys419, Cys313/Cys327, Cys337/Cys360, Cys344/Cys353, and Cys382/Cys389. An N-linked (GlcNAc...) asparagine glycan is attached at Asn210. Ser266 is an active-site residue. Asp458 is a catalytic residue. N-linked (GlcNAc...) asparagine glycosylation occurs at Asn509. Residue His520 is part of the active site.

This sequence belongs to the peptidase S10 family.

It is found in the vacuole. It carries out the reaction Release of a C-terminal amino acid with broad specificity.. Vacuolar carboxypeptidase involved in degradation of small peptides. Digests preferentially peptides containing an aliphatic or hydrophobic residue in P1' position, as well as methionine, leucine or phenylalanine in P1 position of ester substrate. The protein is Carboxypeptidase Y homolog A (CPYA) of Trichophyton equinum (Horse ringworm fungus).